We begin with the raw amino-acid sequence, 536 residues long: Indolin-2-one monooxygenase (536 aa).

Residues 18–34 (GTATHALLLGVLIFLVI) form a helical membrane-spanning segment. Heme is bound at residue Cys-480.

The protein belongs to the cytochrome P450 family. Heme is required as a cofactor.

The protein localises to the membrane. The catalysed reaction is indolin-2-one + reduced [NADPH--hemoprotein reductase] + O2 = 3-hydroxyindolin-2-one + oxidized [NADPH--hemoprotein reductase] + H2O + H(+). It functions in the pathway secondary metabolite biosynthesis; 2,4-dihydroxy-1,4-benzoxazin-3-one biosynthesis; 2,4-dihydroxy-1,4-benzoxazin-3-one from indoleglycerol phosphate: step 3/5. Catalyzes the conversion of indolin-2-one to 3-hydroxyindolin-2-one. The protein is Indolin-2-one monooxygenase (CYP71C2) of Zea mays (Maize).